We begin with the raw amino-acid sequence, 754 residues long: 5-methyltetrahydropteroyltriglutamate--homocysteine methyltransferase (754 aa).

Residues 19 to 22 (RELK) and lysine 121 contribute to the 5-methyltetrahydropteroyltri-L-glutamate site. Residues 423–425 (IGS) and glutamate 476 contribute to the L-homocysteine site. L-methionine-binding positions include 423–425 (IGS) and glutamate 476. 5-methyltetrahydropteroyltri-L-glutamate contacts are provided by residues 507 to 508 (RC) and tryptophan 553. Residue aspartate 591 coordinates L-homocysteine. Position 591 (aspartate 591) interacts with L-methionine. Position 597 (glutamate 597) interacts with 5-methyltetrahydropteroyltri-L-glutamate. Residues histidine 633, cysteine 635, and glutamate 657 each contribute to the Zn(2+) site. Histidine 686 (proton donor) is an active-site residue. Zn(2+) is bound at residue cysteine 718.

This sequence belongs to the vitamin-B12 independent methionine synthase family. Zn(2+) is required as a cofactor.

The catalysed reaction is 5-methyltetrahydropteroyltri-L-glutamate + L-homocysteine = tetrahydropteroyltri-L-glutamate + L-methionine. Its pathway is amino-acid biosynthesis; L-methionine biosynthesis via de novo pathway; L-methionine from L-homocysteine (MetE route): step 1/1. Catalyzes the transfer of a methyl group from 5-methyltetrahydrofolate to homocysteine resulting in methionine formation. The sequence is that of 5-methyltetrahydropteroyltriglutamate--homocysteine methyltransferase from Corynebacterium efficiens (strain DSM 44549 / YS-314 / AJ 12310 / JCM 11189 / NBRC 100395).